The primary structure comprises 171 residues: Large ribosomal subunit protein uL10 (171 aa).

The protein belongs to the universal ribosomal protein uL10 family. As to quaternary structure, part of the ribosomal stalk of the 50S ribosomal subunit. The N-terminus interacts with L11 and the large rRNA to form the base of the stalk. The C-terminus forms an elongated spine to which L12 dimers bind in a sequential fashion forming a multimeric L10(L12)X complex.

In terms of biological role, forms part of the ribosomal stalk, playing a central role in the interaction of the ribosome with GTP-bound translation factors. This Nitrosomonas eutropha (strain DSM 101675 / C91 / Nm57) protein is Large ribosomal subunit protein uL10.